We begin with the raw amino-acid sequence, 422 residues long: NADP-dependent malic enzyme (422 aa).

Tyrosine 39 acts as the Proton donor in catalysis. Catalysis depends on lysine 94, which acts as the Proton acceptor. Residue lysine 94 participates in substrate binding. Residues glutamate 136, aspartate 137, and aspartate 162 each coordinate a divalent metal cation. Residues 195 to 198 (AGAA), asparagine 286, and asparagine 318 each bind NADP(+). Residue asparagine 318 participates in substrate binding.

This sequence belongs to the malic enzymes family. Requires Mg(2+) as cofactor. Mn(2+) is required as a cofactor.

It carries out the reaction (S)-malate + NADP(+) = pyruvate + CO2 + NADPH. The enzyme catalyses oxaloacetate + H(+) = pyruvate + CO2. The chain is NADP-dependent malic enzyme from Halomonas elongata (strain ATCC 33173 / DSM 2581 / NBRC 15536 / NCIMB 2198 / 1H9).